The sequence spans 115 residues: Large ribosomal subunit protein bL19 (115 aa).

This sequence belongs to the bacterial ribosomal protein bL19 family.

Its function is as follows. This protein is located at the 30S-50S ribosomal subunit interface and may play a role in the structure and function of the aminoacyl-tRNA binding site. The sequence is that of Large ribosomal subunit protein bL19 from Enterobacter sp. (strain 638).